The following is a 589-amino-acid chain: TAF5-like RNA polymerase II p300/CBP-associated factor-associated factor 65 kDa subunit 5L (589 aa).

The span at 211 to 221 shows a compositional bias: polar residues; the sequence is ASGSSSRSENN. The interval 211–230 is disordered; the sequence is ASGSSSRSENNGLEPPDMPS. WD repeat units lie at residues 266 to 305, 340 to 379, 382 to 421, 424 to 463, 466 to 505, and 508 to 547; these read NTEQ…LKSE, GHCG…NTVL, GHAY…PLRI, GHLA…SVRL, GHRG…LYKE, and GHTD…CSAP.

The protein belongs to the WD repeat TAF5 family. The PCAF complex is composed of a number of TBP-associated factors (TAFS), such as TAF5, TAF5L, TAF6, TAF6L, TAF9, TAF10 and TAF12, PCAF, and also PCAF-associated factors (PAFs), such as TADA2L/ADA2, TADA3L/ADA3 and SPT3. Component of the STAGA transcription coactivator-HAT complex, at least composed of SUPT3H, GCN5L2, TAF5L, TAF6L, SUPT7L, TADA3L, TAD1L, TAF10, TAF12, TRRAP and TAF9.

It is found in the nucleus. Its function is as follows. Functions as a component of the PCAF complex. The PCAF complex is capable of efficiently acetylating histones in a nucleosomal context. The PCAF complex could be considered as the human version of the yeast SAGA complex. With TAF6L, acts as an epigenetic regulator essential for somatic reprogramming. Regulates target genes through H3K9ac deposition and MYC recruitment which trigger MYC regulatory network to orchestrate gene expression programs to control embryonic stem cell state. This Homo sapiens (Human) protein is TAF5-like RNA polymerase II p300/CBP-associated factor-associated factor 65 kDa subunit 5L.